We begin with the raw amino-acid sequence, 165 residues long: Large ribosomal subunit protein uL11 (165 aa).

At Ser38 the chain carries Phosphoserine. Residue Lys40 forms a Glycyl lysine isopeptide (Lys-Gly) (interchain with G-Cter in SUMO2) linkage. Lys48 participates in a covalent cross-link: Glycyl lysine isopeptide (Lys-Gly) (interchain with G-Cter in ubiquitin). The residue at position 54 (Lys54) is an N6-acetyllysine. A Glycyl lysine isopeptide (Lys-Gly) (interchain with G-Cter in ubiquitin) cross-link involves residue Lys83. Position 165 is a phosphoserine (Ser165).

This sequence belongs to the universal ribosomal protein uL11 family. In terms of assembly, component of the large ribosomal subunit. Mature ribosomes consist of a small (40S) and a large (60S) subunit. The 40S subunit contains about 33 different proteins and 1 molecule of RNA (18S). The 60S subunit contains about 49 different proteins and 3 molecules of RNA (28S, 5.8S and 5S). Ubiquitinated at Lys-48 and Lys-83 by RNF14 and RNF25 in response to ribosome collisions (ribosome stalling).

It is found in the cytoplasm. Component of the large ribosomal subunit. The ribosome is a large ribonucleoprotein complex responsible for the synthesis of proteins in the cell. Binds directly to 26S ribosomal RNA. The chain is Large ribosomal subunit protein uL11 (Rpl12) from Mus musculus (Mouse).